Reading from the N-terminus, the 865-residue chain is DNA mismatch repair protein MutS (865 aa).

609-616 lines the ATP pocket; the sequence is GPNMAGKS.

It belongs to the DNA mismatch repair MutS family.

Functionally, this protein is involved in the repair of mismatches in DNA. It is possible that it carries out the mismatch recognition step. This protein has a weak ATPase activity. The polypeptide is DNA mismatch repair protein MutS (Leuconostoc citreum (strain KM20)).